A 341-amino-acid chain; its full sequence is MINLQDVSKVYKSKHGDVNAVQNVSLSIKKGEIFGIIGYSGAGKSSLIRLLNGLEKPTSGTVEVAGTKINEVNGRGLRKARHEISMIFQHFNLLWSRTVRDNIMFPLEIAGVKKSERIKRANELIKLVGLEGKEKSYPSQLSGGQKQRVGIARALANNPKVLLCDEATSALDPQTTDSILDLLSDINERLGLTIVLITHEMHVIRKICNRVAVMENGKVVEEGEVLDVFKNPKEQMTKRFVQQVTEPEETKETLQHLLDDTASGKMVQLTFVGESAEQPLITEMIRNFNVSVNILQGKISQTKDGAYGSLFIHIDGDEEEVQNVIRFINDKQVKAEVITNV.

The 240-residue stretch at 2–241 (INLQDVSKVY…PKEQMTKRFV (240 aa)) folds into the ABC transporter domain. 38 to 45 (GYSGAGKS) contributes to the ATP binding site.

Belongs to the ABC transporter superfamily. Methionine importer (TC 3.A.1.24) family. The complex is composed of two ATP-binding proteins (MetN), two transmembrane proteins (MetP) and a solute-binding protein (MetQ).

It localises to the cell membrane. The enzyme catalyses L-methionine(out) + ATP + H2O = L-methionine(in) + ADP + phosphate + H(+). It catalyses the reaction D-methionine(out) + ATP + H2O = D-methionine(in) + ADP + phosphate + H(+). Its function is as follows. Part of the ABC transporter complex MetNPQ involved in methionine import. Responsible for energy coupling to the transport system. It has also been shown to be involved in methionine sulfoxide transport. This is Methionine import ATP-binding protein MetN from Bacillus subtilis (strain 168).